The sequence spans 462 residues: NADH-quinone oxidoreductase subunit N 1 (462 aa).

A run of 15 helical transmembrane segments spans residues 4–24, 32–52, 60–80, 88–108, 113–133, 148–168, 178–198, 220–240, 251–271, 279–299, 307–327, 351–371, 374–394, 416–436, and 439–459; these read FVVA…VLCL, AGFY…WAVA, IACF…ALLA, FAGD…LLLA, WIML…LIAA, FLPG…IYAA, LAAP…GVGF, VAAF…LHVC, LWPA…LGAV, LLAY…MAVN, LFYL…VGAL, AGVL…AGFV, FLVF…FGII, LIAH…ALGV, and AGLV…AALF.

It belongs to the complex I subunit 2 family. NDH-1 is composed of 14 different subunits. Subunits NuoA, H, J, K, L, M, N constitute the membrane sector of the complex.

It is found in the cell inner membrane. The catalysed reaction is a quinone + NADH + 5 H(+)(in) = a quinol + NAD(+) + 4 H(+)(out). Functionally, NDH-1 shuttles electrons from NADH, via FMN and iron-sulfur (Fe-S) centers, to quinones in the respiratory chain. The immediate electron acceptor for the enzyme in this species is believed to be ubiquinone. Couples the redox reaction to proton translocation (for every two electrons transferred, four hydrogen ions are translocated across the cytoplasmic membrane), and thus conserves the redox energy in a proton gradient. The protein is NADH-quinone oxidoreductase subunit N 1 of Solidesulfovibrio magneticus (strain ATCC 700980 / DSM 13731 / RS-1) (Desulfovibrio magneticus).